A 321-amino-acid chain; its full sequence is Cytochrome f (321 aa).

Positions 1-37 are cleaved as a signal peptide; sequence MKIYRQIKQSFSITKIVFSFFISLLLNLVAQPTICQA. Heme-binding residues include F38, C58, C61, and H62. Residues 287-306 traverse the membrane as a helical segment; that stretch reads VQGLIAFFISVVLAQIFLVL.

This sequence belongs to the cytochrome f family. As to quaternary structure, the 4 large subunits of the cytochrome b6-f complex are cytochrome b6, subunit IV (17 kDa polypeptide, petD), cytochrome f and the Rieske protein, while the 4 small subunits are PetG, PetL, PetM and PetN. The complex functions as a dimer. It depends on heme as a cofactor.

It localises to the plastid. It is found in the cyanelle thylakoid membrane. Its function is as follows. Component of the cytochrome b6-f complex, which mediates electron transfer between photosystem II (PSII) and photosystem I (PSI), cyclic electron flow around PSI, and state transitions. This is Cytochrome f (petA) from Cyanophora paradoxa.